A 369-amino-acid chain; its full sequence is Peptidyl-prolyl cis-trans isomerase D (369 aa).

The PPIase cyclophilin-type domain maps to 8–173; it reads YFDLSIGGKP…ADVRIDACGI (166 aa). TPR repeat units follow at residues 218-251, 269-302, and 306-339; these read VEAVKAIGTAQLQAARFDVAVQKYAKAAGFLQEY, VAVHLNLALAALKAGNHQRVLSAASEVLHGAADD, and AKALYRRGLAYHHLKDPEMALTDLELAATYQPGD.

It belongs to the cyclophilin-type PPIase family. PPIase D subfamily.

The protein resides in the cytoplasm. The catalysed reaction is [protein]-peptidylproline (omega=180) = [protein]-peptidylproline (omega=0). PPIases accelerate the folding of proteins. It catalyzes the cis-trans isomerization of proline imidic peptide bonds in oligopeptides. The chain is Peptidyl-prolyl cis-trans isomerase D (CPR6) from Eremothecium gossypii (strain ATCC 10895 / CBS 109.51 / FGSC 9923 / NRRL Y-1056) (Yeast).